Reading from the N-terminus, the 132-residue chain is MDVTRLLLATLLVFLCFFTAYSHPPPEEKLRDDRSLRSNSSVNLLDFPSVSIVALNKKSKQTSRKEAEKKRSSKKEASMKKVARPRTPLSAPCVATRDSCKPPAPACCDPCASCQCRFFRSACSCRVLSLNC.

A signal peptide spans 1–22 (MDVTRLLLATLLVFLCFFTAYS). Residue asparagine 39 is glycosylated (N-linked (GlcNAc...) asparagine). Residues 57 to 88 (KKSKQTSRKEAEKKRSSKKEASMKKVARPRTP) form a disordered region. Positions 63–79 (SRKEAEKKRSSKKEASM) are enriched in basic and acidic residues. Intrachain disulfides connect cysteine 93-cysteine 108, cysteine 100-cysteine 114, cysteine 107-cysteine 125, cysteine 111-cysteine 132, and cysteine 116-cysteine 123. Residues 93 to 132 (CVATRDSCKPPAPACCDPCASCQCRFFRSACSCRVLSLNC) form the Agouti domain.

The protein localises to the secreted. Its function is as follows. Involved in the regulation of melanogenesis. The binding of ASP to MC1R precludes alpha-MSH initiated signaling and thus blocks production of cAMP, leading to a down-regulation of eumelanogenesis (brown/black pigment) and thus increasing synthesis of pheomelanin (yellow/red pigment). This Macaca assamensis (Assam macaque) protein is Agouti-signaling protein (ASIP).